The following is a 740-amino-acid chain: Ion-translocating oxidoreductase complex subunit C (740 aa).

4Fe-4S ferredoxin-type domains lie at Gly369–Tyr397 and Lys407–Phe436. The [4Fe-4S] cluster site is built by Cys377, Cys380, Cys383, Cys387, Cys416, Cys419, Cys422, and Cys426. 2 disordered regions span residues Leu571–Ala590 and Lys602–Lys716. Low complexity-rich tracts occupy residues Gln573–Gln583 and Gln637–Gln647.

It belongs to the 4Fe4S bacterial-type ferredoxin family. RnfC subfamily. As to quaternary structure, the complex is composed of six subunits: RsxA, RsxB, RsxC, RsxD, RsxE and RsxG. The cofactor is [4Fe-4S] cluster.

It is found in the cell inner membrane. In terms of biological role, part of a membrane-bound complex that couples electron transfer with translocation of ions across the membrane. Required to maintain the reduced state of SoxR. Probably transfers electron from NAD(P)H to SoxR. This chain is Ion-translocating oxidoreductase complex subunit C, found in Escherichia coli (strain K12).